The following is a 70-amino-acid chain: Biotin carboxyl carrier protein of acetyl-CoA carboxylase (70 aa).

The Biotinyl-binding domain occupies glycine 1–lysine 69. Position 35 is an N6-biotinyllysine (lysine 35).

The protein localises to the plastid. It localises to the chloroplast. It functions in the pathway lipid metabolism; fatty acid biosynthesis. In terms of biological role, this protein is a component of the acetyl coenzyme A carboxylase complex; first, biotin carboxylase catalyzes the carboxylation of the carrier protein and then the transcarboxylase transfers the carboxyl group to form malonyl-CoA. This is Biotin carboxyl carrier protein of acetyl-CoA carboxylase from Solanum lycopersicum (Tomato).